The chain runs to 126 residues: Large ribosomal subunit protein uL22 (126 aa).

This sequence belongs to the universal ribosomal protein uL22 family. As to quaternary structure, part of the 50S ribosomal subunit.

Its function is as follows. This protein binds specifically to 23S rRNA; its binding is stimulated by other ribosomal proteins, e.g. L4, L17, and L20. It is important during the early stages of 50S assembly. It makes multiple contacts with different domains of the 23S rRNA in the assembled 50S subunit and ribosome. The globular domain of the protein is located near the polypeptide exit tunnel on the outside of the subunit, while an extended beta-hairpin is found that lines the wall of the exit tunnel in the center of the 70S ribosome. The sequence is that of Large ribosomal subunit protein uL22 from Dinoroseobacter shibae (strain DSM 16493 / NCIMB 14021 / DFL 12).